Reading from the N-terminus, the 250-residue chain is Green-light absorbing proteorhodopsin (250 aa).

The N-terminal stretch at 1-18 (MGKLLLILGSVIALPTFA) is a signal peptide. The Extracellular portion of the chain corresponds to 19–29 (AGGGDLDASDY). Residues 30 to 53 (TGVSFWLVTAALLASTVFFFVERD) form a helical membrane-spanning segment. Topologically, residues 54–58 (RVSAK) are cytoplasmic. A helical transmembrane segment spans residues 59 to 87 (WKTSLTVSGLVTGIAFWHYMYMRGVWIET). The Extracellular portion of the chain corresponds to 88-90 (GDS). Residues 91-118 (PTVFRYIDWLLTVPLLICEFYLILAAAT) form a helical membrane-spanning segment. The Cytoplasmic segment spans residues 119–121 (NVA). Residues 122 to 144 (GSLFKKLLVGSLVMLVFGYMGEA) form a helical membrane-spanning segment. Residues 145–147 (GIM) lie on the Extracellular side of the membrane. A helical transmembrane segment spans residues 148–177 (AAWPAFIIGCLAWVYMIYELWAGEGKSACN). At 178–180 (TAS) the chain is on the cytoplasmic side. A helical transmembrane segment spans residues 181–208 (PAVQSAYNTMMYIIIFGWAIYPVGYFTG). Residues 209–218 (YLMGDGGSAL) are Extracellular-facing. The helical transmembrane segment at 219-249 (NLNLIYNLADFVNKILFGLIIWNVAVKESSN) threads the bilayer. Position 232 is an N6-(retinylidene)lysine (Lys232). A topological domain (cytoplasmic) is located at residue Ala250.

It belongs to the archaeal/bacterial/fungal opsin family. As to quaternary structure, homopentamer. GPR protomers assemble into a pentamer around a central pore with a C5 symmetry axis. Contains one covalently linked retinal chromophore per subunit.

The protein resides in the cell membrane. Light-driven proton pump. The polypeptide is Green-light absorbing proteorhodopsin (Unknown prokaryotic organism).